The chain runs to 300 residues: Tyrosine recombinase XerC (300 aa).

Residues 2 to 87 form the Core-binding (CB) domain; the sequence is TSLSPLLEKF…SIKSFYKYLV (86 aa). Positions 108 to 294 constitute a Tyr recombinase domain; sequence TLPKVLPVEE…TWEQLQQVYD (187 aa). Catalysis depends on residues Arg148, Lys172, His246, Arg249, and His272. Catalysis depends on Tyr281, which acts as the O-(3'-phospho-DNA)-tyrosine intermediate.

It belongs to the 'phage' integrase family. XerC subfamily. Forms a cyclic heterotetrameric complex composed of two molecules of XerC and two molecules of XerD.

The protein localises to the cytoplasm. Site-specific tyrosine recombinase, which acts by catalyzing the cutting and rejoining of the recombining DNA molecules. The XerC-XerD complex is essential to convert dimers of the bacterial chromosome into monomers to permit their segregation at cell division. It also contributes to the segregational stability of plasmids. The chain is Tyrosine recombinase XerC from Myxococcus xanthus.